Consider the following 364-residue polypeptide: Homeobox protein Nkx-2.3 (364 aa).

Positions 132 to 153 (GDCKAAEESERPKPRSRRKPRV) are disordered. Positions 135 to 144 (KAAEESERPK) are enriched in basic and acidic residues. Positions 148–207 (RRKPRVLFSQAQVFELERRFKQQRYLSAPEREHLASSLKLTSTQVKIWFQNRRYKCKRQR) form a DNA-binding region, homeobox.

Belongs to the NK-2 homeobox family.

Its subcellular location is the nucleus. In terms of biological role, transcription factor. The sequence is that of Homeobox protein Nkx-2.3 (NKX2-3) from Homo sapiens (Human).